The chain runs to 1414 residues: DNA-directed RNA polymerase subunit beta' (1414 aa).

Residues Cys-70, Cys-72, Cys-85, and Cys-88 each coordinate Zn(2+). 3 residues coordinate Mg(2+): Asp-460, Asp-462, and Asp-464. Residues Cys-814, Cys-888, Cys-895, and Cys-898 each coordinate Zn(2+). Residues 1392-1403 show a composition bias toward low complexity; that stretch reads EQALSEALKSSA. A disordered region spans residues 1392-1414; that stretch reads EQALSEALKSSAPQEAKAAQKDE.

The protein belongs to the RNA polymerase beta' chain family. As to quaternary structure, the RNAP catalytic core consists of 2 alpha, 1 beta, 1 beta' and 1 omega subunit. When a sigma factor is associated with the core the holoenzyme is formed, which can initiate transcription. Mg(2+) is required as a cofactor. It depends on Zn(2+) as a cofactor.

The enzyme catalyses RNA(n) + a ribonucleoside 5'-triphosphate = RNA(n+1) + diphosphate. Functionally, DNA-dependent RNA polymerase catalyzes the transcription of DNA into RNA using the four ribonucleoside triphosphates as substrates. In Coxiella burnetii (strain RSA 331 / Henzerling II), this protein is DNA-directed RNA polymerase subunit beta'.